The primary structure comprises 262 residues: MTSTVIDIPDSVRAKIDVRNLNFYYGQFHALKNINMSIPDRKVTAFIGPSGCGKSTLLRTFNKMYGLYPEQRAEGEINMDGENLLTSRQDIALLRAKVGMVFQKPTPFPMSIYDNIAFGVRLFEKLSRSEMDDRVEWALSKAALWNEAKDKLHQSGYGLSGGQQQRLCIARGIAIRPEVLLLDEPCSALDPISTGRIEELIAELKDEYTVVIVTHNMQQAARCSDYTAYMYLGELIEFGETEKIFIKPHRKETEDYITGRFG.

The ABC transporter domain maps to 16–257 (IDVRNLNFYY…PHRKETEDYI (242 aa)). Position 48-55 (48-55 (GPSGCGKS)) interacts with ATP.

This sequence belongs to the ABC transporter superfamily. Phosphate importer (TC 3.A.1.7) family. As to quaternary structure, the complex is composed of two ATP-binding proteins (PstB), two transmembrane proteins (PstC and PstA) and a solute-binding protein (PstS).

Its subcellular location is the cell inner membrane. The enzyme catalyses phosphate(out) + ATP + H2O = ADP + 2 phosphate(in) + H(+). In terms of biological role, part of the ABC transporter complex PstSACB involved in phosphate import. Responsible for energy coupling to the transport system. The polypeptide is Phosphate import ATP-binding protein PstB (Cupriavidus pinatubonensis (strain JMP 134 / LMG 1197) (Cupriavidus necator (strain JMP 134))).